A 412-amino-acid chain; its full sequence is L-cysteine:1D-myo-inositol 2-amino-2-deoxy-alpha-D-glucopyranoside ligase (412 aa).

The tract at residues 1–30 (MQTWSSPSVPKLRGAPRPLRLHDTATGEVR) is disordered. Zn(2+) is bound at residue cysteine 43. Residues 43 to 46 (CGIT), threonine 58, and 81 to 83 (NVT) contribute to the L-cysteinyl-5'-AMP site. Residues 45 to 55 (ITPYDATHLGH) carry the 'HIGH' region motif. The 'ERGGDP' region signature appears at 187–192 (ERGGDP). Tryptophan 227 lines the L-cysteinyl-5'-AMP pocket. Residue cysteine 231 participates in Zn(2+) binding. 249 to 251 (GSD) serves as a coordination point for L-cysteinyl-5'-AMP. Histidine 256 contacts Zn(2+). An L-cysteinyl-5'-AMP-binding site is contributed by isoleucine 283. Residues 289 to 293 (KMSKS) carry the 'KMSKS' region motif.

This sequence belongs to the class-I aminoacyl-tRNA synthetase family. MshC subfamily. As to quaternary structure, monomer. The cofactor is Zn(2+).

It catalyses the reaction 1D-myo-inositol 2-amino-2-deoxy-alpha-D-glucopyranoside + L-cysteine + ATP = 1D-myo-inositol 2-(L-cysteinylamino)-2-deoxy-alpha-D-glucopyranoside + AMP + diphosphate + H(+). Catalyzes the ATP-dependent condensation of GlcN-Ins and L-cysteine to form L-Cys-GlcN-Ins. This is L-cysteine:1D-myo-inositol 2-amino-2-deoxy-alpha-D-glucopyranoside ligase from Actinosynnema mirum (strain ATCC 29888 / DSM 43827 / JCM 3225 / NBRC 14064 / NCIMB 13271 / NRRL B-12336 / IMRU 3971 / 101).